The primary structure comprises 370 residues: F-box protein At1g66490 (370 aa).

The region spanning 1–46 (MRTISDLPVALVEEILSRVPLTSLSAVRSTCKTWNALSKTQIFGKT) is the F-box domain.

In Arabidopsis thaliana (Mouse-ear cress), this protein is F-box protein At1g66490.